The primary structure comprises 560 residues: NRAMP-like transporter smf-3 (560 aa).

Residues 1–43 (MEGEMKCPIEEIREKPEMRKAQQTYEVQVEVEDTPDTTFSWRK) are Cytoplasmic-facing. The helical transmembrane segment at 44–64 (LWAFTGPGFLMSIAYLDPGNI) threads the bilayer. Residues 65–71 (ESDLQAG) are Extracellular-facing. The chain crosses the membrane as a helical span at residues 72 to 92 (AISYFKLIWVLLVAHIMGLLL). The Cytoplasmic segment spans residues 93-120 (QRLAARLGVVSGKHMAEIAFSYYPKIPR). Residues 121 to 141 (LVLWMLVESAIVGSDMQEVIG) traverse the membrane as a helical segment. At 142–152 (TAISFYLLSNG) the chain is on the extracellular side. Residues 153-173 (VIPLWAGVLITICDTFTFLFL) form a helical membrane-spanning segment. At 174–182 (EKYGVRKFE) the chain is on the cytoplasmic side. Residues 183–203 (AFFCFLITCMAITFGYEFGVS) form a helical membrane-spanning segment. Topologically, residues 204–229 (APDAGKMFSGMFVPWCNGCDNNMVMQ) are extracellular. A helical membrane pass occupies residues 230 to 250 (GVAIIGAVIMPHNFYLHSALV). Residues 251 to 268 (KSRRVDRRRAEKVTEANK) lie on the Cytoplasmic side of the membrane. Residues 269 to 289 (YFFIESAFALFVSFIINTLVI) form a helical membrane-spanning segment. The Extracellular segment spans residues 290–339 (SVFAQGMYGKTNQDIRDTCYNNTHNGMPDFYKVEFPANNDAAQSDIYHAG). An N-linked (GlcNAc...) asparagine glycan is attached at N310. The chain crosses the membrane as a helical span at residues 340-360 (IFLGCTFGIFALYVWAVGILA). Residues 361–390 (AGQSSTMTGTYAGQFAMEGFIQIKLPQWKR) are Cytoplasmic-facing. A helical transmembrane segment spans residues 391–411 (ILITRSLAILPTLAVVIFSGG). At 412-420 (IDNISSLND) the chain is on the extracellular side. N-linked (GlcNAc...) asparagine glycosylation occurs at N414. Residues 421 to 441 (FLNCLQLIQLPFALIPVLTFV) traverse the membrane as a helical segment. At 442 to 458 (SDRNIMHEYKLASVSKV) the chain is on the cytoplasmic side. A helical membrane pass occupies residues 459–479 (VSIVISLIILFINFYFLYSWI). Residues 480–486 (GSTFGYN) lie on the Extracellular side of the membrane. Residues 487-507 (AVSIPITIFCAIFYIIFIAYL) form a helical membrane-spanning segment. Topologically, residues 508–560 (TYYCLVAMEFISPIQTKWLAEPIYHDFDAPWLEDSENPSTKNTISDDELSMRY) are cytoplasmic.

This sequence belongs to the NRAMP family. In terms of tissue distribution, expressed in dopaminergic neurons (at protein level). Expressed in intestine with a weaker expression in the most proximal and distal regions. Weakly expressed in the hyp1-6, hyp7 and hyp8-12 hypodermis and in head and tail neurons.

The protein localises to the apical cell membrane. It is found in the cytoplasmic vesicle membrane. In terms of biological role, probable divalent metal ion transporter which regulates the uptake of several heavy metals such as Mn(2+), Al(3+) and iron. Plays a role in modulating Al(3+)-induced dopamine (DA) neuron degeneration through the intracellular sequestration of Al(3+). The sequence is that of NRAMP-like transporter smf-3 from Caenorhabditis elegans.